A 463-amino-acid polypeptide reads, in one-letter code: MENFYNETEPTEPRGGVDPLRVVTAAEDVPAPVGGVSVRALTGCVLCALIVSTLLGNTLVCAAVIKFRHLRSKVTNAFVVSLAVSDLFVAVLVMPWRAVSEVAGVWLFGRFCDTWVAFDIMCSTASILNLCVISMDRYWAISNPFRYERRMTRRFAFLMIAVAWTLSVLISFIPVQLNWHRADNNSSAHEQGDCNASLNRTYAISSSLISFYIPVLIMVGTYTRIFRIAQTQIRRISSLERAAGQRAQNQSHRASTHDESALKTSFKRETKVLKTLSVIMGVFVFCWLPFFVLNCVVPFCDVDKVGEPPCVSDTTFNIFVWFGWANSSLNPVIYAFNADFRKAFTTILGCSKFCSSSAVQAVDFSNELVSYHHDTTLQKEPVPGPGAHRLVAPLPQNRGDAGPNFDKVSVVSDDSRADRNLLLPAILQCDCEAEISLDMVPFGSSGPADSFLIPGQIQDLGDL.

Residues 1–39 (MENFYNETEPTEPRGGVDPLRVVTAAEDVPAPVGGVSVR) are Extracellular-facing. Asparagine 6 carries an N-linked (GlcNAc...) asparagine glycan. The helical transmembrane segment at 40–65 (ALTGCVLCALIVSTLLGNTLVCAAVI) threads the bilayer. Residues 66 to 76 (KFRHLRSKVTN) lie on the Cytoplasmic side of the membrane. A helical transmembrane segment spans residues 77 to 103 (AFVVSLAVSDLFVAVLVMPWRAVSEVA). Topologically, residues 104 to 112 (GVWLFGRFC) are extracellular. A disulfide bridge connects residues cysteine 112 and cysteine 194. Residues 113-135 (DTWVAFDIMCSTASILNLCVISM) form a helical membrane-spanning segment. The Cytoplasmic segment spans residues 136–154 (DRYWAISNPFRYERRMTRR). The helical transmembrane segment at 155-180 (FAFLMIAVAWTLSVLISFIPVQLNWH) threads the bilayer. The Extracellular segment spans residues 181–198 (RADNNSSAHEQGDCNASL). Residues 199 to 223 (NRTYAISSSLISFYIPVLIMVGTYT) traverse the membrane as a helical segment. Topologically, residues 224–273 (RIFRIAQTQIRRISSLERAAGQRAQNQSHRASTHDESALKTSFKRETKVL) are cytoplasmic. Residues 274-301 (KTLSVIMGVFVFCWLPFFVLNCVVPFCD) form a helical membrane-spanning segment. The Extracellular segment spans residues 302-315 (VDKVGEPPCVSDTT). The helical transmembrane segment at 316–337 (FNIFVWFGWANSSLNPVIYAFN) threads the bilayer. Topologically, residues 338-463 (ADFRKAFTTI…PGQIQDLGDL (126 aa)) are cytoplasmic.

This sequence belongs to the G-protein coupled receptor 1 family.

The protein resides in the cell membrane. Functionally, receptor for dopamine. The protein is D(5)-like dopamine receptor (dl) of Takifugu rubripes (Japanese pufferfish).